We begin with the raw amino-acid sequence, 115 residues long: Inner membrane protein YidH (115 aa).

Topologically, residues 1–30 are cytoplasmic; that stretch reads MKISRLGEAPDYRFSLANERTFLAWIRTAL. Residues 31-51 form a helical membrane-spanning segment; that stretch reads GFLAAGVGLDQLAPDFATPVI. Residues 52 to 53 are Periplasmic-facing; sequence RE. A helical transmembrane segment spans residues 54 to 74; sequence LLALLLCLFSGGLAMYGYLRW. The Cytoplasmic portion of the chain corresponds to 75-92; the sequence is LRNEKAMRLKEDLPYTNS. The helical transmembrane segment at 93–113 threads the bilayer; that stretch reads LLIISLILMVVAVIVMGLVLY. Residues 114-115 lie on the Periplasmic side of the membrane; the sequence is AG.

The protein to M.tuberculosis Rv2272.

The protein localises to the cell inner membrane. In Escherichia coli O157:H7, this protein is Inner membrane protein YidH (yidH).